A 344-amino-acid chain; its full sequence is N-acetyl-gamma-glutamyl-phosphate reductase (344 aa).

Cys-149 is an active-site residue.

Belongs to the NAGSA dehydrogenase family. Type 1 subfamily.

Its subcellular location is the cytoplasm. The catalysed reaction is N-acetyl-L-glutamate 5-semialdehyde + phosphate + NADP(+) = N-acetyl-L-glutamyl 5-phosphate + NADPH + H(+). The protein operates within amino-acid biosynthesis; L-arginine biosynthesis; N(2)-acetyl-L-ornithine from L-glutamate: step 3/4. In terms of biological role, catalyzes the NADPH-dependent reduction of N-acetyl-5-glutamyl phosphate to yield N-acetyl-L-glutamate 5-semialdehyde. The chain is N-acetyl-gamma-glutamyl-phosphate reductase from Thermoanaerobacter sp. (strain X514).